We begin with the raw amino-acid sequence, 347 residues long: Queuosine 5'-phosphate N-glycosylase/hydrolase (347 aa).

Queuine-binding residues include histidine 53, phenylalanine 237, aspartate 239, aspartate 321, and aspartate 326. Aspartate 239 acts as the Nucleophile or transition state stabilizer in catalysis.

This sequence belongs to the QNG1 protein family.

It carries out the reaction queuosine 5'-phosphate + H2O = queuine + D-ribose 5-phosphate. Catalyzes the hydrolysis of queuosine 5'-phosphate, releasing the nucleobase queuine (q). Is required for salvage of queuine from exogenous queuosine (Q) that is imported and then converted to queuosine 5'-phosphate intracellularly. The polypeptide is Queuosine 5'-phosphate N-glycosylase/hydrolase (Nematostella vectensis (Starlet sea anemone)).